We begin with the raw amino-acid sequence, 376 residues long: Alanine racemase (376 aa).

Lys44 functions as the Proton acceptor; specific for D-alanine in the catalytic mechanism. An N6-(pyridoxal phosphate)lysine modification is found at Lys44. Arg139 provides a ligand contact to substrate. Tyr271 (proton acceptor; specific for L-alanine) is an active-site residue. Substrate is bound at residue Met319.

The protein belongs to the alanine racemase family. Requires pyridoxal 5'-phosphate as cofactor.

The enzyme catalyses L-alanine = D-alanine. It functions in the pathway amino-acid biosynthesis; D-alanine biosynthesis; D-alanine from L-alanine: step 1/1. In terms of biological role, catalyzes the interconversion of L-alanine and D-alanine. May also act on other amino acids. This Bordetella petrii (strain ATCC BAA-461 / DSM 12804 / CCUG 43448) protein is Alanine racemase (alr).